An 847-amino-acid chain; its full sequence is uncharacterized protein (847 aa).

Residues 116 to 126 (TGSSELTTSKT) are compositionally biased toward polar residues. Disordered stretches follow at residues 116–153 (TGSSELTTSKTPIDVDTKEQENRLKQKAEAAPKSTPIE), 208–245 (LKNFEDKSPPQAENASSSKKDEPISVECTDETSSRLSP), and 361–392 (DLEKNKESSSASLSTNKLAESPTEADKNSNVI). A compositionally biased stretch (basic and acidic residues) spans 128-145 (IDVDTKEQENRLKQKAEA). A compositionally biased stretch (polar residues) spans 368–378 (SSSASLSTNKL).

This is an uncharacterized protein from Caenorhabditis elegans.